A 252-amino-acid polypeptide reads, in one-letter code: Undecaprenyl-diphosphatase (252 aa).

The next 7 membrane-spanning stretches (helical) occupy residues 1–21 (MTTL…FLPI), 42–62 (HKAF…FLYF), 74–94 (ILIA…IIKS), 95–115 (LFNP…LILI), 172–192 (AAEF…FYDV), 206–226 (NLIV…KWLL), and 232–252 (HSFI…YLWY).

Belongs to the UppP family.

It localises to the cell inner membrane. The catalysed reaction is di-trans,octa-cis-undecaprenyl diphosphate + H2O = di-trans,octa-cis-undecaprenyl phosphate + phosphate + H(+). Catalyzes the dephosphorylation of undecaprenyl diphosphate (UPP). Confers resistance to bacitracin. This is Undecaprenyl-diphosphatase from Sulfurihydrogenibium sp. (strain YO3AOP1).